The primary structure comprises 73 residues: DNA-directed RNA polymerase subunit omega (73 aa).

This sequence belongs to the RNA polymerase subunit omega family. In terms of assembly, the RNAP catalytic core consists of 2 alpha, 1 beta, 1 beta' and 1 omega subunit. When a sigma factor is associated with the core the holoenzyme is formed, which can initiate transcription.

The catalysed reaction is RNA(n) + a ribonucleoside 5'-triphosphate = RNA(n+1) + diphosphate. In terms of biological role, promotes RNA polymerase assembly. Latches the N- and C-terminal regions of the beta' subunit thereby facilitating its interaction with the beta and alpha subunits. This chain is DNA-directed RNA polymerase subunit omega, found in Maridesulfovibrio salexigens (strain ATCC 14822 / DSM 2638 / NCIMB 8403 / VKM B-1763) (Desulfovibrio salexigens).